A 172-amino-acid chain; its full sequence is Adenine phosphoribosyltransferase (172 aa).

This sequence belongs to the purine/pyrimidine phosphoribosyltransferase family. In terms of assembly, homodimer.

Its subcellular location is the cytoplasm. It carries out the reaction AMP + diphosphate = 5-phospho-alpha-D-ribose 1-diphosphate + adenine. The protein operates within purine metabolism; AMP biosynthesis via salvage pathway; AMP from adenine: step 1/1. In terms of biological role, catalyzes a salvage reaction resulting in the formation of AMP, that is energically less costly than de novo synthesis. The chain is Adenine phosphoribosyltransferase from Streptococcus uberis (strain ATCC BAA-854 / 0140J).